The following is a 1128-amino-acid chain: Adipocyte enhancer-binding protein 1 (1128 aa).

Positions 1-25 (MAAVRTASLLCGLLALLALCPEGSP) are cleaved as a signal peptide. The tract at residues 40–368 (GFLSEFETQS…PRKGEELEEE (329 aa)) is disordered. Residues 77–109 (PRADAEAPPEKNKDKEKKGKKDKGPKAAKHLEG) are compositionally biased toward basic and acidic residues. The span at 113-163 (PTKKPKEKPPKATKKPKEKPPKATKKPKEKPPKATKKPKEKPPKATKRPSA) shows a compositional bias: basic residues. Composition is skewed to polar residues over residues 178 to 187 (RSLTSPSNPG) and 198 to 209 (TSLNTWQGQGEE). Residues 249–261 (RQKQPRPTPSRKR) show a composition bias toward basic residues. Composition is skewed to basic and acidic residues over residues 267 to 282 (PEEK…EVDP) and 327 to 363 (EELK…RKGE). Residues 375–532 (IKCPPIGMES…LCMRLEVLGC (158 aa)) form the F5/8 type C domain. The interval 382-547 (MESHRIEDNQ…YSYYAQNEVV (166 aa)) is required for DNA-binding and interaction with NFKBIA. Interaction with MAPK1 and MAPK3 regions lie at residues 413-616 (AGAN…TAGM) and 998-1128 (DPSR…FGDF). Residue Asn-520 is glycosylated (N-linked (GlcNAc...) asparagine). The tract at residues 547–977 (VTTDSLDFRH…TQCNFILARS (431 aa)) is interaction with PTEN. Positions 555-896 (RHHSYKDMRQ…EALLTFMEQV (342 aa)) constitute a Peptidase M14 domain. A required for transcriptional repression region spans residues 933–1128 (DYWRILNPGE…ETYTVNFGDF (196 aa)). Positions 1027 to 1056 (LRRLNSTTGPATSPTPALTLPPSPTPGSTS) are disordered. The span at 1030–1044 (LNSTTGPATSPTPAL) shows a compositional bias: low complexity.

Belongs to the peptidase M14 family. As to quaternary structure, interacts with different types of collagen, including collagens I, III, and V. Interacts with GNG5, NFKBIA, MAPK1, MAPK3 and PTEN. May interact with calmodulin. Interaction with MAPK1 may stimulate DNA-binding. Binds to DNA in vitro. Phosphorylated by MAPK1 in vitro. Expressed in aorta.

Its subcellular location is the secreted. In terms of biological role, as a positive regulator of collagen fibrillogenesis, it is probably involved in the organization and remodeling of the extracellular matrix. May positively regulate MAP-kinase activity in adipocytes, leading to enhanced adipocyte proliferation and reduced adipocyte differentiation. May also positively regulate NF-kappa-B activity in macrophages by promoting the phosphorylation and subsequent degradation of I-kappa-B-alpha (NFKBIA), leading to enhanced macrophage inflammatory responsiveness. Can act as a transcriptional repressor. This chain is Adipocyte enhancer-binding protein 1 (Aebp1), found in Rattus norvegicus (Rat).